The chain runs to 146 residues: Cytochrome c oxidase subunit 5A, mitochondrial (146 aa).

The N-terminal 37 residues, 1–37 (MLAAALRRCTAAAAARGLLHPVSAPSPAAAVCSIRCY), are a transit peptide targeting the mitochondrion. The SIFI-degron motif lies at 2 to 16 (LAAALRRCTAAAAAR). 2 positions are modified to N6-acetyllysine: Lys-83 and Lys-109. A Phosphothreonine modification is found at Thr-137.

Component of the cytochrome c oxidase (complex IV, CIV), a multisubunit enzyme composed of 14 subunits. The complex is composed of a catalytic core of 3 subunits MT-CO1, MT-CO2 and MT-CO3, encoded in the mitochondrial DNA, and 11 supernumerary subunits COX4I, COX5A, COX5B, COX6A, COX6B, COX6C, COX7A, COX7B, COX7C, COX8 and NDUFA4, which are encoded in the nuclear genome. The complex exists as a monomer or a dimer and forms supercomplexes (SCs) in the inner mitochondrial membrane with NADH-ubiquinone oxidoreductase (complex I, CI) and ubiquinol-cytochrome c oxidoreductase (cytochrome b-c1 complex, complex III, CIII), resulting in different assemblies (supercomplex SCI(1)III(2)IV(1) and megacomplex MCI(2)III(2)IV(2)). Interacts with AFG1L. Interacts with RAB5IF. Post-translationally, in response to mitochondrial stress, the precursor protein is ubiquitinated by the SIFI complex in the cytoplasm before mitochondrial import, leading to its degradation. Within the SIFI complex, UBR4 initiates ubiquitin chain that are further elongated or branched by KCMF1. As to expression, expressed in the head of epididymal sperm but not in testicular sperm (at protein level).

Its subcellular location is the mitochondrion inner membrane. The protein operates within energy metabolism; oxidative phosphorylation. Component of the cytochrome c oxidase, the last enzyme in the mitochondrial electron transport chain which drives oxidative phosphorylation. The respiratory chain contains 3 multisubunit complexes succinate dehydrogenase (complex II, CII), ubiquinol-cytochrome c oxidoreductase (cytochrome b-c1 complex, complex III, CIII) and cytochrome c oxidase (complex IV, CIV), that cooperate to transfer electrons derived from NADH and succinate to molecular oxygen, creating an electrochemical gradient over the inner membrane that drives transmembrane transport and the ATP synthase. Cytochrome c oxidase is the component of the respiratory chain that catalyzes the reduction of oxygen to water. Electrons originating from reduced cytochrome c in the intermembrane space (IMS) are transferred via the dinuclear copper A center (CU(A)) of subunit 2 and heme A of subunit 1 to the active site in subunit 1, a binuclear center (BNC) formed by heme A3 and copper B (CU(B)). The BNC reduces molecular oxygen to 2 water molecules using 4 electrons from cytochrome c in the IMS and 4 protons from the mitochondrial matrix. The polypeptide is Cytochrome c oxidase subunit 5A, mitochondrial (Cox5a) (Rattus norvegicus (Rat)).